Here is a 164-residue protein sequence, read N- to C-terminus: DNA-binding protein inhibitor ID-1 (164 aa).

One can recognise a bHLH domain in the interval 46–98; that stretch reads LPALLDEQQVNVLLYDMNGCYSRLKELVPTLPQNRKVSKVEILQHVIDYIRDL. Positions 91–104 match the Nuclear export signal motif; it reads VIDYIRDLQLELNS.

As to quaternary structure, heterodimer with other HLH proteins. Interacts with COPS5, IFI204, GATA4, NKX2-5, CLOCK and BMAL1. Isoform Short can form homodimers. In terms of processing, phosphorylated in vitro by PKA and PKC.

The protein resides in the cytoplasm. It localises to the nucleus. In terms of biological role, transcriptional regulator (lacking a basic DNA binding domain) which negatively regulates the basic helix-loop-helix (bHLH) transcription factors by forming heterodimers and inhibiting their DNA binding and transcriptional activity. Implicated in regulating a variety of cellular processes, including cellular growth, senescence, differentiation, apoptosis, angiogenesis, and neoplastic transformation. Inhibits skeletal muscle and cardiac myocyte differentiation. Regulates the circadian clock by repressing the transcriptional activator activity of the CLOCK-BMAL1 heterodimer. The chain is DNA-binding protein inhibitor ID-1 (Id1) from Rattus norvegicus (Rat).